The sequence spans 174 residues: MSTNSDNDKIFQEVQKFVKNYDLNKDGSVTSFDIYRSFLKKMDGDIFKASQAAGVLCSTVDMDHDGKFTYQEIAKYCADEAKKNVEQNAEIAALADVEAMLLRFDKDKDKKLTKTEFVEYFKGNGHTPYSDRDQVLKIIDLDKDGCVSANELQEWFKKRRIDYARMVSARGPNC.

EF-hand domains are found at residues 9–44 (KIFQ…KMDG), 60–83 (VDMD…EAKK), 92–127 (AALA…NGHT), and 133–162 (DQVL…RRID). The Ca(2+) site is built by Asp22, Asn24, Asp26, Ser28, and Asp33. Ca(2+) contacts are provided by Asp105, Asp107, Asp109, Lys111, Glu116, Asp140, Asp142, Asp144, Cys146, and Glu151.

In Dictyostelium discoideum (Social amoeba), this protein is Calcium-binding protein F (cbpF).